The sequence spans 314 residues: Cytochrome f (314 aa).

Positions 1 to 30 are cleaved as a signal peptide; sequence MATNKFFKSLLFALTIAINSFGFCIQDAVA. Heme-binding residues include Tyr31, Cys51, Cys54, and His55. A helical transmembrane segment spans residues 280–300; sequence IYGYLAFCFSVLITQIMLVLK.

The protein belongs to the cytochrome f family. The 4 large subunits of the cytochrome b6-f complex are cytochrome b6, subunit IV (17 kDa polypeptide, petD), cytochrome f and the Rieske protein, while the 4 small subunits are PetG, PetL, PetM and PetN. The complex functions as a dimer. Requires heme as cofactor.

Its subcellular location is the plastid. The protein resides in the chloroplast thylakoid membrane. Its function is as follows. Component of the cytochrome b6-f complex, which mediates electron transfer between photosystem II (PSII) and photosystem I (PSI), cyclic electron flow around PSI, and state transitions. The chain is Cytochrome f from Phaeodactylum tricornutum (strain CCAP 1055/1).